A 170-amino-acid polypeptide reads, in one-letter code: Endoribonuclease YbeY (170 aa).

3 residues coordinate Zn(2+): H128, H132, and H138.

The protein belongs to the endoribonuclease YbeY family. Zn(2+) serves as cofactor.

Its subcellular location is the cytoplasm. Its function is as follows. Single strand-specific metallo-endoribonuclease involved in late-stage 70S ribosome quality control and in maturation of the 3' terminus of the 16S rRNA. The protein is Endoribonuclease YbeY of Ruegeria sp. (strain TM1040) (Silicibacter sp.).